Reading from the N-terminus, the 231-residue chain is MTQDELKQLVGQAAADYVNATVPEGAVIGVGTGSTANCFIDALAGNKARYRGAVSSSLATTARLQTHGIKVFDLNEIDSLPVYVDGADEIDRSGAMIKGGGGALTREKIVASVSDVFVCIADASKLVETLGTFPLPIEVVPMARTAIGRRVTALGGVPVVRVTKEGVPFITDNGNEIIDVKGLRISDPRTLETHINAWPGVVTVGLFAARGANLCLLGTDTGVETIEYSKG.

Residues 32–35 (TGST), 85–88 (DGAD), and 98–101 (KGGG) contribute to the substrate site. Glutamate 107 functions as the Proton acceptor in the catalytic mechanism. Residue lysine 125 participates in substrate binding.

The protein belongs to the ribose 5-phosphate isomerase family. In terms of assembly, homodimer.

It carries out the reaction aldehydo-D-ribose 5-phosphate = D-ribulose 5-phosphate. It participates in carbohydrate degradation; pentose phosphate pathway; D-ribose 5-phosphate from D-ribulose 5-phosphate (non-oxidative stage): step 1/1. In terms of biological role, catalyzes the reversible conversion of ribose-5-phosphate to ribulose 5-phosphate. This chain is Ribose-5-phosphate isomerase A, found in Paraburkholderia phytofirmans (strain DSM 17436 / LMG 22146 / PsJN) (Burkholderia phytofirmans).